A 132-amino-acid polypeptide reads, in one-letter code: Large ribosomal subunit protein uL14 (132 aa).

This sequence belongs to the universal ribosomal protein uL14 family. In terms of assembly, part of the 50S ribosomal subunit. Forms a cluster with proteins L3 and L24e, part of which may contact the 16S rRNA in 2 intersubunit bridges.

Functionally, binds to 23S rRNA. Forms part of two intersubunit bridges in the 70S ribosome. The polypeptide is Large ribosomal subunit protein uL14 (Halorubrum lacusprofundi (strain ATCC 49239 / DSM 5036 / JCM 8891 / ACAM 34)).